Here is a 366-residue protein sequence, read N- to C-terminus: Adenine DNA glycosylase (366 aa).

DNA is bound at residue 30–31 (WR). Glu43 acts as the Proton donor/acceptor in catalysis. Residues 48-49 (QT), 86-88 (LGY), Tyr126, and Glu188 each bind DNA. The region spanning 105–133 (RYGGKVPDDPDEFSRLKGVGPYTVGAVLS) is the HhH domain. [4Fe-4S] cluster-binding residues include Cys198, Cys205, Cys208, and Cys214. Ser308 provides a ligand contact to DNA.

The protein belongs to the Nth/MutY family. [4Fe-4S] cluster serves as cofactor.

It carries out the reaction Hydrolyzes free adenine bases from 7,8-dihydro-8-oxoguanine:adenine mismatched double-stranded DNA, leaving an apurinic site.. Functionally, base excision repair (BER) glycosylase that initiates repair of A:oxoG to C:G by removing the inappropriately paired adenine base from the DNA backbone, generating an abasic site product. 8-oxoguanine (oxoG) is a genotoxic DNA lesion resulting from oxidation of guanine; this residue is misread by replicative DNA polymerases, that insert adenine instead of cytosine opposite the oxidized damaged base. Shows a powerful dicrimination of A versus C, since it does not cleave cytosine in oxoG:C pairs. May also be able to remove adenine from A:G mispairs, although this activity may not be physiologically relevant. The sequence is that of Adenine DNA glycosylase from Geobacillus stearothermophilus (Bacillus stearothermophilus).